Reading from the N-terminus, the 330-residue chain is Protein-lysine N-methyltransferase EEF2KMT (330 aa).

M1 is modified (N-acetylmethionine). S-adenosyl-L-methionine contacts are provided by residues W139, 165-167, W228, and A247; that span reads GSG.

It belongs to the class I-like SAM-binding methyltransferase superfamily. EEF2KMT family. Interacts with FAM86B2 and FAM86C1P.

Its subcellular location is the cytoplasm. The enzyme catalyses L-lysyl-[protein] + 3 S-adenosyl-L-methionine = N(6),N(6),N(6)-trimethyl-L-lysyl-[protein] + 3 S-adenosyl-L-homocysteine + 3 H(+). Catalyzes the trimethylation of eukaryotic elongation factor 2 (EEF2) on 'Lys-525'. This Homo sapiens (Human) protein is Protein-lysine N-methyltransferase EEF2KMT.